The sequence spans 207 residues: Small ribosomal subunit protein uS4c (207 aa).

Positions 92–155 constitute an S4 RNA-binding domain; sequence MRLDNILFRL…TYQSILSKRI (64 aa).

It belongs to the universal ribosomal protein uS4 family. As to quaternary structure, part of the 30S ribosomal subunit. Contacts protein S5. The interaction surface between S4 and S5 is involved in control of translational fidelity.

The protein resides in the plastid. It is found in the chloroplast. One of the primary rRNA binding proteins, it binds directly to 16S rRNA where it nucleates assembly of the body of the 30S subunit. Functionally, with S5 and S12 plays an important role in translational accuracy. This is Small ribosomal subunit protein uS4c (rps4) from Equisetum scirpoides (Dwarf-scouring rush).